An 817-amino-acid polypeptide reads, in one-letter code: Ribonuclease R 1 (817 aa).

In terms of domain architecture, RNB spans 259–584 (RVDYRNEITF…DLLVHRLIRE (326 aa)). The region spanning 637–717 (GEEYEGIIAS…MTGEIDFEYL (81 aa)) is the S1 motif domain. The tract at residues 728 to 817 (AKAKKKPDHK…DGRKKPHKRG (90 aa)) is disordered. Basic residues predominate over residues 729–742 (KAKKKPDHKGRKKS). 2 stretches are compositionally biased toward basic and acidic residues: residues 767–777 (RRADEKFEFDK) and 795–810 (KFTD…TDGR).

This sequence belongs to the RNR ribonuclease family. RNase R subfamily.

It is found in the cytoplasm. It carries out the reaction Exonucleolytic cleavage in the 3'- to 5'-direction to yield nucleoside 5'-phosphates.. 3'-5' exoribonuclease that releases 5'-nucleoside monophosphates and is involved in maturation of structured RNAs. The polypeptide is Ribonuclease R 1 (rnr1) (Lactococcus lactis subsp. lactis (strain IL1403) (Streptococcus lactis)).